We begin with the raw amino-acid sequence, 423 residues long: Histidine--tRNA ligase (423 aa).

The protein belongs to the class-II aminoacyl-tRNA synthetase family. In terms of assembly, homodimer.

The protein localises to the cytoplasm. The catalysed reaction is tRNA(His) + L-histidine + ATP = L-histidyl-tRNA(His) + AMP + diphosphate + H(+). The polypeptide is Histidine--tRNA ligase (Desulfosudis oleivorans (strain DSM 6200 / JCM 39069 / Hxd3) (Desulfococcus oleovorans)).